A 115-amino-acid chain; its full sequence is Ribonuclease P protein component (115 aa).

This sequence belongs to the RnpA family. In terms of assembly, consists of a catalytic RNA component (M1 or rnpB) and a protein subunit.

The enzyme catalyses Endonucleolytic cleavage of RNA, removing 5'-extranucleotides from tRNA precursor.. RNaseP catalyzes the removal of the 5'-leader sequence from pre-tRNA to produce the mature 5'-terminus. It can also cleave other RNA substrates such as 4.5S RNA. The protein component plays an auxiliary but essential role in vivo by binding to the 5'-leader sequence and broadening the substrate specificity of the ribozyme. This chain is Ribonuclease P protein component, found in Bacillus cereus (strain 03BB102).